Consider the following 766-residue polypeptide: Darlin (766 aa).

ARM repeat units follow at residues 82–119, 167–208, 423–464, and 465–537; these read QLFE…NLTY, DFIQ…NLVD, EPNC…NLTL, and PTIN…ASMD. Positions 561 to 585 are disordered; that stretch reads EEKEKTIEKTDEKTDEKTNEKKQSK. The ARM 5 repeat unit spans residues 610–649; it reads HQEKMKQLIEESVEPFFSLLQSPFPILQVEGAKGLVLLIK.

It belongs to the RAP1GDS1 family. Binds to small GTPases racE, racC but not rab21. Binds preferentially to GDP-bound racE.

Its function is as follows. Part of a signaling pathway that initiates the aggregation and leads to the formation of aggregation centers or streams. Not essential for cytokinesis, pinocytosis or phagocytosis. Not essential for development, except in starvation-induced aggregation. This is Darlin (darA) from Dictyostelium discoideum (Social amoeba).